Reading from the N-terminus, the 453-residue chain is Folate transporter 1 (453 aa).

A glycan (N-linked (GlcNAc...) asparagine) is linked at N36. 5 consecutive transmembrane segments (helical) span residues 48 to 68 (PYWTYSYMLALIPMFILTDIL), 73 to 93 (IVMIEAIGLVATWALLVFGKG), 102 to 122 (VSFGVASAAEIAYYSYIYSIV), 136 to 156 (AAALMGKLVAFGLGQTLISTH), and 161 to 181 (LVLNQISLGAVCLVTIIAIFL). A glycan (N-linked (GlcNAc...) asparagine) is linked at N260. Transmembrane regions (helical) follow at residues 276-296 (VANGVVEFVNTALGAFLSLFI), 306-326 (HGQMILFITSAIVAVLLYLCS), 331-351 (VLVAYSSYVVITSIYHMLITA), 368-388 (IFGCNTFVAVCLQSLLTLVVV), and 401-421 (FVIYSGYFALVASIFAFFFMI).

Belongs to the reduced folate carrier (RFC) transporter (TC 2.A.48) family. In terms of tissue distribution, highly expressed in pharynx and posterior part of the intestine. Expressed at lower levels in the body wall muscles, head muscles, and vulva muscles. Highly expressed in the intestine of the early larva, levels decrease in the later stages of development.

It is found in the membrane. Folate transporter. The chain is Folate transporter 1 (folt-1) from Caenorhabditis elegans.